The chain runs to 520 residues: GMP synthase [glutamine-hydrolyzing] (520 aa).

The region spanning 9 to 202 (KILILDFGSQ…VRAICGCTGH (194 aa)) is the Glutamine amidotransferase type-1 domain. Residue Cys-86 is the Nucleophile of the active site. Catalysis depends on residues His-176 and Glu-178. The GMPS ATP-PPase domain maps to 203-395 (WTPGQIIEDA…LGLPHQMVWR (193 aa)). 230–236 (SGGVDSS) is a binding site for ATP.

Homodimer.

It carries out the reaction XMP + L-glutamine + ATP + H2O = GMP + L-glutamate + AMP + diphosphate + 2 H(+). It participates in purine metabolism; GMP biosynthesis; GMP from XMP (L-Gln route): step 1/1. Catalyzes the synthesis of GMP from XMP. This chain is GMP synthase [glutamine-hydrolyzing], found in Pelobacter propionicus (strain DSM 2379 / NBRC 103807 / OttBd1).